The sequence spans 1009 residues: Putative receptor-like protein 8 (1009 aa).

An N-terminal signal peptide occupies residues 1 to 22 (MKTNFVILLLLLCVFAISPSQQ). The Extracellular segment spans residues 23 to 961 (EEINQHNPGI…EEDDEAPVDM (939 aa)). 2 N-linked (GlcNAc...) asparagine glycosylation sites follow: Asn159 and Asn197. One copy of the LRR 1; degenerate repeat lies at 204–231 (FEEVRSLELSAGLNGFVDNVEGYKSLRK). LRR repeat units lie at residues 232 to 255 (LKNL…PFIN), 257 to 281 (ATSL…EIKD), 282 to 305 (LTNL…LTHL), 306 to 329 (KKLK…VVCE), 331 to 354 (KNLW…LGRL), 355 to 377 (NKLR…TFNR), 379 to 402 (ESLE…PLAN), 404 to 427 (TKLK…SEPK), 442 to 465 (LEKI…ATIV), 466 to 490 (HELQ…GYAL), 492 to 514 (NLLR…MGEM), 515 to 538 (VNIT…FVTG), 540 to 565 (FSLK…SFTS), 567 to 587 (EELR…LLSS), 588 to 612 (NTTL…MSNL), 613 to 636 (SGLT…LLAI), 638 to 660 (FLSL…VGGE), 662 to 681 (GIKL…DTLL), 682 to 705 (EKVQ…VNTE), 707 to 728 (IYIL…LCDL), 729 to 752 (RNIR…LYNL), 819 to 842 (LDYM…ELGS), 843 to 866 (LSKL…SFSN), 867 to 891 (LKDI…LTNL), and 893 to 916 (SLVV…QFNT). Asn267 is a glycosylation site (N-linked (GlcNAc...) asparagine). 2 N-linked (GlcNAc...) asparagine glycosylation sites follow: Asn390 and Asn402. Residues Asn497, Asn516, Asn526, and Asn551 are each glycosylated (N-linked (GlcNAc...) asparagine). N-linked (GlcNAc...) asparagine glycans are attached at residues Asn588 and Asn611. N-linked (GlcNAc...) asparagine glycosylation is found at Asn716 and Asn751. Asn850, Asn890, Asn903, and Asn934 each carry an N-linked (GlcNAc...) asparagine glycan. A disordered region spans residues 934 to 955 (NRSCDAKKTSDESENGGEEEDD). The span at 945–955 (ESENGGEEEDD) shows a compositional bias: acidic residues. Residues 962–982 (LAFYFSSASTYVTTLIGIFIL) form a helical membrane-spanning segment. Over 983–1009 (MCFDCPLRRAWLRIVDASIASVKSMLP) the chain is Cytoplasmic.

The protein belongs to the RLP family.

The protein localises to the cell membrane. This Arabidopsis thaliana (Mouse-ear cress) protein is Putative receptor-like protein 8.